A 396-amino-acid chain; its full sequence is Elongation factor Tu (396 aa).

The 196-residue stretch at 10–205 (KPHVNIGTIG…ACDDNIPDPV (196 aa)) folds into the tr-type G domain. A G1 region spans residues 19–26 (GHVDHGKT). Position 19 to 26 (19 to 26 (GHVDHGKT)) interacts with GTP. Residue Thr26 participates in Mg(2+) binding. The segment at 62–66 (GITIN) is G2. A G3 region spans residues 83–86 (DAPG). GTP is bound by residues 83–87 (DAPGH) and 138–141 (NKCD). Positions 138-141 (NKCD) are G4. A G5 region spans residues 175 to 177 (SAL).

Belongs to the TRAFAC class translation factor GTPase superfamily. Classic translation factor GTPase family. EF-Tu/EF-1A subfamily. As to quaternary structure, monomer.

The protein localises to the cytoplasm. It carries out the reaction GTP + H2O = GDP + phosphate + H(+). GTP hydrolase that promotes the GTP-dependent binding of aminoacyl-tRNA to the A-site of ribosomes during protein biosynthesis. The polypeptide is Elongation factor Tu (Corynebacterium glutamicum (strain R)).